A 257-amino-acid polypeptide reads, in one-letter code: Type I iodothyronine deiodinase (257 aa).

Residues 1 to 12 (MGLPGLGLLLKR) lie on the Extracellular side of the membrane. Residues 13 to 33 (FGVLVRVALKVAVGKVLLTLW) traverse the membrane as a helical; Signal-anchor for type III membrane protein segment. The Cytoplasmic portion of the chain corresponds to 34-257 (PSAIRPHLLA…CRSSAQSPRL (224 aa)). Residue selenocysteine 126 is part of the active site. Selenocysteine 126 is a non-standard amino acid (selenocysteine).

Belongs to the iodothyronine deiodinase family. Predominantly monomer. Can form homodimers but homodimerization is not essential for enzyme activity. In terms of tissue distribution, liver specific.

Its subcellular location is the cell membrane. It localises to the endoplasmic reticulum membrane. The protein resides in the basolateral cell membrane. It carries out the reaction 3,3',5-triiodo-L-thyronine + iodide + A + H(+) = L-thyroxine + AH2. The catalysed reaction is 3,3',5'-triiodo-L-thyronine + iodide + A + H(+) = L-thyroxine + AH2. The enzyme catalyses 3,3'-diiodo-L-thyronine + iodide + A + H(+) = 3,3',5'-triiodo-L-thyronine + AH2. It catalyses the reaction 3,3'-diiodo-L-thyronine + iodide + A + H(+) = 3,3',5-triiodo-L-thyronine + AH2. It carries out the reaction 3'-iodo-L-thyronine + iodide + A + H(+) = 3',5'-diiodo-L-thyronine + AH2. The catalysed reaction is 3-iodo-L-thyronine + iodide + A + H(+) = 3,5-diiodo-L-thyronine + AH2. The enzyme catalyses 3-iodo-L-thyronine + iodide + A + H(+) = 3,3'-diiodo-L-thyronine + AH2. It catalyses the reaction 3,3'-diiodothyronamine + iodide + A + H(+) = 3,3',5'-triiodothyronamine + AH2. It carries out the reaction 3'-iodothyronamine + iodide + A + H(+) = 3',5'-diiodothyronamine + AH2. The catalysed reaction is 3-iodothyronamine + iodide + A + H(+) = 3,3'-diiodothyronamine + AH2. The enzyme catalyses 3,3'-diiodothyronamine + iodide + A + H(+) = 3,3',5-triiodothyronamine + AH2. It catalyses the reaction 3-iodothyronamine + iodide + A + H(+) = 3,5-diiodothyronamine + AH2. It carries out the reaction 3,3'-diiodo-L-thyronine sulfate + iodide + A + H(+) = 3,3',5'-triiodo-L-thyronine sulfate + AH2. The catalysed reaction is 3,3',5'-triiodo-L-thyronine sulfate + iodide + A + H(+) = L-thyroxine sulfate + AH2. The enzyme catalyses 3,3'-diiodo-L-thyronine sulfate + iodide + A + H(+) = 3,3',5-triiodo-L-thyronine sulfate + AH2. Plays a crucial role in the metabolism of thyroid hormones (TH) and has specific roles in TH activation and inactivation by deiodination. Catalyzes the deiodination of L-thyroxine (T4) to 3,5,3'-triiodothyronine (T3) and 3',5'-diiodothyronine (3',5'-T2) to 3'-monoiodothyronine (3'-T1) via outer-ring deiodination (ORD). Catalyzes the deiodination of T4 to 3,3',5'-triiodothyronine (rT3), T3 to 3,3'-diiodothyronine (3,3'-T2), 3,5-diiodothyronine (3,5-T2) to 3-monoiodothyronine (3-T1) and 3,3'-T2 to 3-T1 via inner-ring deiodination (IRD). Catalyzes the deiodination of rT3 to 3,3'-T2 via ORD. Catalyzes the phenolic ring deiodinations of 3,3',5'-triiodothyronamine, 3',5'-diiodothyronamine and 3,3'-diiodothyronamine as well as tyrosyl ring deiodinations of 3,5,3'-triiodothyronamine and 3,5-diiodothyronamine. Catalyzes the deiodination of L-thyroxine sulfate and 3,3',5-triiodo-L-thyronine sulfate via IRD and of 3,3',5'-triiodo-L-thyronine sulfate via ORD. The protein is Type I iodothyronine deiodinase (DIO1) of Suncus murinus (Asian house shrew).